A 39-amino-acid chain; its full sequence is Photosystem II reaction center protein J (39 aa).

A helical transmembrane segment spans residues 7 to 27; that stretch reads IPLWVVAVIAGLGVIAVVGLF.

Belongs to the PsbJ family. PSII is composed of 1 copy each of membrane proteins PsbA, PsbB, PsbC, PsbD, PsbE, PsbF, PsbH, PsbI, PsbJ, PsbK, PsbL, PsbM, PsbT, PsbX, PsbY, PsbZ, Psb30/Ycf12, peripheral proteins PsbO, CyanoQ (PsbQ), PsbU, PsbV and a large number of cofactors. It forms dimeric complexes.

It is found in the cellular thylakoid membrane. One of the components of the core complex of photosystem II (PSII). PSII is a light-driven water:plastoquinone oxidoreductase that uses light energy to abstract electrons from H(2)O, generating O(2) and a proton gradient subsequently used for ATP formation. It consists of a core antenna complex that captures photons, and an electron transfer chain that converts photonic excitation into a charge separation. This chain is Photosystem II reaction center protein J, found in Gloeothece citriformis (strain PCC 7424) (Cyanothece sp. (strain PCC 7424)).